A 167-amino-acid polypeptide reads, in one-letter code: MSKNSVKDKAKSATANKTIALNKRARHEYHIEERFEAGLALQGWEVKSIRAGRGNIIDAYAYVKQGEIFLIGAQITPLIQASTHVVANDRRERKLLLHRSEIDKLVGKVERDGYTIVPTAMYWSKNKIKLEVALAKGKQTHDKRDAAKDRDWAIEKQRVMRRGNRDA.

Belongs to the SmpB family.

It localises to the cytoplasm. Functionally, required for rescue of stalled ribosomes mediated by trans-translation. Binds to transfer-messenger RNA (tmRNA), required for stable association of tmRNA with ribosomes. tmRNA and SmpB together mimic tRNA shape, replacing the anticodon stem-loop with SmpB. tmRNA is encoded by the ssrA gene; the 2 termini fold to resemble tRNA(Ala) and it encodes a 'tag peptide', a short internal open reading frame. During trans-translation Ala-aminoacylated tmRNA acts like a tRNA, entering the A-site of stalled ribosomes, displacing the stalled mRNA. The ribosome then switches to translate the ORF on the tmRNA; the nascent peptide is terminated with the 'tag peptide' encoded by the tmRNA and targeted for degradation. The ribosome is freed to recommence translation, which seems to be the essential function of trans-translation. In Stenotrophomonas maltophilia (strain R551-3), this protein is SsrA-binding protein.